The following is a 513-amino-acid chain: Beta-glucosidase 5 (513 aa).

The first 26 residues, 1 to 26 (MAAAIAVVYLSLLLLLLHGAAPAVLG), serve as a signal peptide directing secretion. Gln46 is a binding site for a beta-D-glucoside. Catalysis depends on Glu192, which acts as the Proton donor. Cys211 and Cys220 are oxidised to a cystine. Residues Asn224 and Asn273 are each glycosylated (N-linked (GlcNAc...) asparagine). A beta-D-glucoside-binding residues include Tyr336 and Glu405. Glu405 acts as the Nucleophile in catalysis. Asn412 carries an N-linked (GlcNAc...) asparagine glycan. Residues Trp447, 454–455 (EY), and Tyr463 each bind a beta-D-glucoside.

The protein belongs to the glycosyl hydrolase 1 family.

It catalyses the reaction Hydrolysis of terminal, non-reducing beta-D-glucosyl residues with release of beta-D-glucose.. This chain is Beta-glucosidase 5 (BGLU5), found in Oryza sativa subsp. japonica (Rice).